The following is a 91-amino-acid chain: Long neurotoxin OH-57 (91 aa).

Residues Met1–Thr21 form the signal peptide. Cystine bridges form between Cys24-Cys41, Cys34-Cys62, Cys47-Cys51, Cys66-Cys77, and Cys78-Cys83.

The protein belongs to the three-finger toxin family. Long-chain subfamily. Type II alpha-neurotoxin sub-subfamily. As to expression, expressed by the venom gland.

The protein localises to the secreted. Binds with high affinity to muscular (alpha-1/CHRNA1) and neuronal (alpha-7/CHRNA7) nicotinic acetylcholine receptor (nAChR) and inhibits acetylcholine from binding to the receptor, thereby impairing neuromuscular and neuronal transmission. The polypeptide is Long neurotoxin OH-57 (Ophiophagus hannah (King cobra)).